The sequence spans 238 residues: Pyridoxine 5'-phosphate synthase (238 aa).

Residue N9 coordinates 3-amino-2-oxopropyl phosphate. Residue 11–12 coordinates 1-deoxy-D-xylulose 5-phosphate; the sequence is DH. Residue R20 participates in 3-amino-2-oxopropyl phosphate binding. H45 functions as the Proton acceptor in the catalytic mechanism. 1-deoxy-D-xylulose 5-phosphate is bound by residues R47 and H52. Catalysis depends on E72, which acts as the Proton acceptor. Residue T102 coordinates 1-deoxy-D-xylulose 5-phosphate. The active-site Proton donor is H189. 3-amino-2-oxopropyl phosphate contacts are provided by residues G190 and 211 to 212; that span reads GH.

This sequence belongs to the PNP synthase family. As to quaternary structure, homooctamer; tetramer of dimers.

The protein resides in the cytoplasm. The catalysed reaction is 3-amino-2-oxopropyl phosphate + 1-deoxy-D-xylulose 5-phosphate = pyridoxine 5'-phosphate + phosphate + 2 H2O + H(+). It functions in the pathway cofactor biosynthesis; pyridoxine 5'-phosphate biosynthesis; pyridoxine 5'-phosphate from D-erythrose 4-phosphate: step 5/5. Catalyzes the complicated ring closure reaction between the two acyclic compounds 1-deoxy-D-xylulose-5-phosphate (DXP) and 3-amino-2-oxopropyl phosphate (1-amino-acetone-3-phosphate or AAP) to form pyridoxine 5'-phosphate (PNP) and inorganic phosphate. The protein is Pyridoxine 5'-phosphate synthase of Ehrlichia canis (strain Jake).